Reading from the N-terminus, the 113-residue chain is DNA-directed RNA polymerase subunit omega (113 aa).

It belongs to the RNA polymerase subunit omega family. In terms of assembly, the RNAP catalytic core consists of 2 alpha, 1 beta, 1 beta' and 1 omega subunit. When a sigma factor is associated with the core the holoenzyme is formed, which can initiate transcription.

It catalyses the reaction RNA(n) + a ribonucleoside 5'-triphosphate = RNA(n+1) + diphosphate. Its function is as follows. Promotes RNA polymerase assembly. Latches the N- and C-terminal regions of the beta' subunit thereby facilitating its interaction with the beta and alpha subunits. This chain is DNA-directed RNA polymerase subunit omega, found in Rhizorhabdus wittichii (strain DSM 6014 / CCUG 31198 / JCM 15750 / NBRC 105917 / EY 4224 / RW1) (Sphingomonas wittichii).